A 329-amino-acid polypeptide reads, in one-letter code: Holliday junction branch migration complex subunit RuvB (329 aa).

The interval 1 to 180 (MKNILQSTEC…FGIPIHLEFY (180 aa)) is large ATPase domain (RuvB-L). Residues isoleucine 19, arginine 20, glycine 61, lysine 64, threonine 65, threonine 66, 127-129 (EDF), arginine 170, tyrosine 180, and arginine 217 contribute to the ATP site. Residue threonine 65 participates in Mg(2+) binding. Residues 181-252 (STEELIKVIQ…FADKALLRLG (72 aa)) are small ATPAse domain (RuvB-S). Positions 255-329 (KLGLDRQDIQ…ISYLKEQSYI (75 aa)) are head domain (RuvB-H). Arginine 308 and arginine 313 together coordinate DNA.

This sequence belongs to the RuvB family. Homohexamer. Forms an RuvA(8)-RuvB(12)-Holliday junction (HJ) complex. HJ DNA is sandwiched between 2 RuvA tetramers; dsDNA enters through RuvA and exits via RuvB. An RuvB hexamer assembles on each DNA strand where it exits the tetramer. Each RuvB hexamer is contacted by two RuvA subunits (via domain III) on 2 adjacent RuvB subunits; this complex drives branch migration. In the full resolvosome a probable DNA-RuvA(4)-RuvB(12)-RuvC(2) complex forms which resolves the HJ.

Its subcellular location is the cytoplasm. It catalyses the reaction ATP + H2O = ADP + phosphate + H(+). Functionally, the RuvA-RuvB-RuvC complex processes Holliday junction (HJ) DNA during genetic recombination and DNA repair, while the RuvA-RuvB complex plays an important role in the rescue of blocked DNA replication forks via replication fork reversal (RFR). RuvA specifically binds to HJ cruciform DNA, conferring on it an open structure. The RuvB hexamer acts as an ATP-dependent pump, pulling dsDNA into and through the RuvAB complex. RuvB forms 2 homohexamers on either side of HJ DNA bound by 1 or 2 RuvA tetramers; 4 subunits per hexamer contact DNA at a time. Coordinated motions by a converter formed by DNA-disengaged RuvB subunits stimulates ATP hydrolysis and nucleotide exchange. Immobilization of the converter enables RuvB to convert the ATP-contained energy into a lever motion, pulling 2 nucleotides of DNA out of the RuvA tetramer per ATP hydrolyzed, thus driving DNA branch migration. The RuvB motors rotate together with the DNA substrate, which together with the progressing nucleotide cycle form the mechanistic basis for DNA recombination by continuous HJ branch migration. Branch migration allows RuvC to scan DNA until it finds its consensus sequence, where it cleaves and resolves cruciform DNA. The chain is Holliday junction branch migration complex subunit RuvB from Ehrlichia canis (strain Jake).